The chain runs to 365 residues: Alanine racemase (365 aa).

The active-site Proton acceptor; specific for D-alanine is Lys32. The residue at position 32 (Lys32) is an N6-(pyridoxal phosphate)lysine. Arg128 is a substrate binding site. Residue Tyr257 is the Proton acceptor; specific for L-alanine of the active site. Met305 is a binding site for substrate.

This sequence belongs to the alanine racemase family. The cofactor is pyridoxal 5'-phosphate.

It carries out the reaction L-alanine = D-alanine. Its pathway is amino-acid biosynthesis; D-alanine biosynthesis; D-alanine from L-alanine: step 1/1. Catalyzes the interconversion of L-alanine and D-alanine. May also act on other amino acids. The chain is Alanine racemase (alr) from Francisella tularensis subsp. holarctica (strain LVS).